The chain runs to 1128 residues: Nck-associated protein 1 (1128 aa).

The tract at residues 640–665 is disordered; that stretch reads AVNKKSKKQTGKKGEPEREKPGVESM. Over residues 651-665 the composition is skewed to basic and acidic residues; it reads KKGEPEREKPGVESM. Residues 995–1015 form a helical membrane-spanning segment; sequence IACLLMVFVAVSMPTLASNVM.

This sequence belongs to the HEM-1/HEM-2 family.

It localises to the cell membrane. The protein resides in the cell projection. It is found in the lamellipodium membrane. Its function is as follows. Part of the WAVE complex that regulates lamellipodia formation. The WAVE complex regulates actin filament reorganization via its interaction with the Arp2/3 complex. Actin remodeling activity is regulated by RAC1. Plays a role in neural tube closure. This chain is Nck-associated protein 1 (nckap1), found in Danio rerio (Zebrafish).